Here is a 454-residue protein sequence, read N- to C-terminus: CCA-adding enzyme (454 aa).

Positions 59 and 62 each coordinate ATP. The CTP site is built by serine 59 and arginine 62. 3 residues coordinate Mg(2+): aspartate 71, aspartate 73, and aspartate 125. 3 residues coordinate ATP: histidine 148, lysine 167, and tyrosine 176. 3 residues coordinate CTP: histidine 148, lysine 167, and tyrosine 176.

The protein belongs to the tRNA nucleotidyltransferase/poly(A) polymerase family. Archaeal CCA-adding enzyme subfamily. Homodimer. Mg(2+) is required as a cofactor.

The enzyme catalyses a tRNA precursor + 2 CTP + ATP = a tRNA with a 3' CCA end + 3 diphosphate. The catalysed reaction is a tRNA with a 3' CCA end + 2 CTP + ATP = a tRNA with a 3' CCACCA end + 3 diphosphate. In terms of biological role, catalyzes the addition and repair of the essential 3'-terminal CCA sequence in tRNAs without using a nucleic acid template. Adds these three nucleotides in the order of C, C, and A to the tRNA nucleotide-73, using CTP and ATP as substrates and producing inorganic pyrophosphate. tRNA 3'-terminal CCA addition is required both for tRNA processing and repair. Also involved in tRNA surveillance by mediating tandem CCA addition to generate a CCACCA at the 3' terminus of unstable tRNAs. While stable tRNAs receive only 3'-terminal CCA, unstable tRNAs are marked with CCACCA and rapidly degraded. In Methanosarcina barkeri (strain Fusaro / DSM 804), this protein is CCA-adding enzyme.